Consider the following 159-residue polypeptide: Disease resistance response protein Pi176 (159 aa).

Belongs to the BetVI family.

The polypeptide is Disease resistance response protein Pi176 (Pisum sativum (Garden pea)).